The chain runs to 133 residues: Putative biopolymer transport protein ExbD-like 1 (133 aa).

Residues 1 to 15 lie on the Cytoplasmic side of the membrane; it reads MNYDNYWDEDKPELN. A helical transmembrane segment spans residues 16–32; it reads ITPLVDVMLVLLAILMV. Topologically, residues 33–133 are periplasmic; it reads TTPTLTYKEE…FLKVSLITSP (101 aa).

The protein belongs to the ExbD/TolR family.

It localises to the cell inner membrane. The polypeptide is Putative biopolymer transport protein ExbD-like 1 (Helicobacter pylori (strain ATCC 700392 / 26695) (Campylobacter pylori)).